The primary structure comprises 246 residues: C-X-C motif chemokine 16 (246 aa).

The N-terminal stretch at 1–26 is a signal peptide; sequence MRRGFGPLSLAFFLFLLALLTLPGDG. The Extracellular segment spans residues 27 to 201; the sequence is NQGSVAGSCS…PGAGASTPAW (175 aa). 2 disulfide bridges follow: Cys35-Cys65 and Cys37-Cys79. Disordered regions lie at residues 104-150 and 175-198; these read GKSF…SGAL and PEAEANEKQQDDRQQEAPGAGAST. The segment covering 128–146 has biased composition (polar residues); the sequence is PSDTSTPAHSQSTQHSTLP. Residues 175-189 are compositionally biased toward basic and acidic residues; it reads PEAEANEKQQDDRQQ. A helical transmembrane segment spans residues 202–222; the sequence is VPVLSLLAIVFFLTAAMAYVL. The Cytoplasmic portion of the chain corresponds to 223 to 246; the sequence is CNRRATQQNSAGLQLWYTPVEPRP.

Belongs to the intercrine alpha (chemokine CxC) family. Post-translationally, glycosylated. In terms of tissue distribution, widely expressed. Not detected in purified B- and T-cells.

Its subcellular location is the membrane. Functionally, induces a strong chemotactic response. Induces calcium mobilization. Binds to CXCR6/Bonzo. Also acts as a scavenger receptor on macrophages, which specifically binds to OxLDL (oxidized low density lipoprotein), suggesting that it may be involved in pathophysiology such as atherogenesis. This is C-X-C motif chemokine 16 (Cxcl16) from Mus musculus (Mouse).